The sequence spans 339 residues: MSLLEKFERYPLTFGPTPIEHLPRLTAALGGKVDIYAKRDDCNSGLAMGGNKLRKLEYIVPDAIASGADTLVSIGGVQSNHTRMVAATAAKIGMKCVVIQEKWVPHYDAVYDRVGNILMTKLMGADSRLVEDGFDIGIRKSWEDAIQSVEDAGGKPYAIPAGASVHKFGGLGYVGFAEEVAAQEKDLGFIFDYIIVCVVTGSTQGGMIVGFAALDRADRVIGIDASGTLQQTRDQVRKIVDATSELVNLGRSVREDEIVINPDYAYPAYGVPSEETNEAIRLAARTEAMITDPVYEGKSMQGMIDLARKGFFPEGSKVLYAHLGGAPALNGYSYYYKDG.

K52 carries the post-translational modification N6-(pyridoxal phosphate)lysine. S79 serves as the catalytic Nucleophile.

The protein belongs to the ACC deaminase/D-cysteine desulfhydrase family. Homotrimer. Pyridoxal 5'-phosphate is required as a cofactor.

The catalysed reaction is 1-aminocyclopropane-1-carboxylate + H2O = 2-oxobutanoate + NH4(+). Its function is as follows. Catalyzes a cyclopropane ring-opening reaction, the irreversible conversion of 1-aminocyclopropane-1-carboxylate (ACC) to ammonia and alpha-ketobutyrate. Allows growth on ACC as a nitrogen source. This is 1-aminocyclopropane-1-carboxylate deaminase from Rhizobium leguminosarum bv. viciae.